The sequence spans 60 residues: Beta-toxin BotIT2 (60 aa).

One can recognise an LCN-type CS-alpha/beta domain in the interval 1 to 60 (DGYIKGYKGCKITCVINDDYCDTECKAEGGTYGYCWKWGLACWCEDLPDEKRWKSETNTC). Intrachain disulfides connect Cys-10/Cys-60, Cys-14/Cys-35, Cys-21/Cys-42, and Cys-25/Cys-44.

Belongs to the long (4 C-C) scorpion toxin superfamily. Sodium channel inhibitor family. Beta subfamily. In terms of tissue distribution, expressed by the venom gland.

The protein localises to the secreted. In terms of biological role, beta toxins bind voltage-independently at site-4 of sodium channels (Nav) and shift the voltage of activation toward more negative potentials thereby affecting sodium channel activation and promoting spontaneous and repetitive firing. This toxin specifically acts by inducing a new current with very slow activation/deactivation kinetics due to the transformation of normal fast channels into slow ones. It possess properties of excitatory and depressant toxins. It is highly active on insects and less active on mammals. The protein is Beta-toxin BotIT2 of Buthus occitanus tunetanus (Common European scorpion).